A 193-amino-acid polypeptide reads, in one-letter code: E3 ubiquitin-protein ligase RMA2 (193 aa).

Residues 21–75 (CNICLDQVRDPVVTLCGHLFCWPCIHKWTYASNNSRQRVDQYDHKREPPKCPVCK) form an RING-type zinc finger. Residues 175–192 (LSRVYLFLLCFMFMCLFL) traverse the membrane as a helical; Anchor for type IV membrane protein segment.

As to quaternary structure, interacts with ERABP1. In terms of tissue distribution, barely detected in roots and limited to the root tips. Expressed in leaf hydathodes and in siliques.

It localises to the endoplasmic reticulum membrane. The enzyme catalyses S-ubiquitinyl-[E2 ubiquitin-conjugating enzyme]-L-cysteine + [acceptor protein]-L-lysine = [E2 ubiquitin-conjugating enzyme]-L-cysteine + N(6)-ubiquitinyl-[acceptor protein]-L-lysine.. The protein operates within protein modification; protein ubiquitination. In terms of biological role, E3 ubiquitin-protein ligase that promotes the ubiquitination and proteasomal degradation of the auxin-binding protein ERABP1. The protein is E3 ubiquitin-protein ligase RMA2 (RMA2) of Arabidopsis thaliana (Mouse-ear cress).